Here is a 255-residue protein sequence, read N- to C-terminus: Ribonuclease HII (255 aa).

The RNase H type-2 domain maps to 58–247 (RYIAGIDEAG…VKSMVLGARY (190 aa)). Residues aspartate 64, glutamate 65, and aspartate 156 each coordinate a divalent metal cation.

This sequence belongs to the RNase HII family. It depends on Mn(2+) as a cofactor. Mg(2+) is required as a cofactor.

The protein localises to the cytoplasm. It catalyses the reaction Endonucleolytic cleavage to 5'-phosphomonoester.. Functionally, endonuclease that specifically degrades the RNA of RNA-DNA hybrids. This is Ribonuclease HII from Syntrophomonas wolfei subsp. wolfei (strain DSM 2245B / Goettingen).